The sequence spans 509 residues: MTIAKKPLVLLIMDGWGYRPNMPDNAVANANTPVLDKLCKDYANNLLSASGMDVGLPDGQMGNSEVGHTNIGAGRTVYQNLTKVTKSISDGDFFDNKNFVDAVDQAVAAGKAVHIMGLASPGGVHSHDQHIVAAIELAAQRGAKNILVHAFLDGRDTPPRSAAGTLALFDEKYAQLGVGRTATLVGRYFAMDRDNRWDRVEQAYNLLTQAKADHTAESALAGLENAYARDENDEFVKATVIGEPAAIEDGDAVLFMNFRADRARELTYTFTDSNFSGFERASVPNVHFVTLTEFADDITAPAAFSSERLTNTLGEWLADHGKTQLRISETEKYAHVTFFFNGGVESEFKGEDRTLIKSPSVATYDMQPEMSSIELTEKLVSAIKSTKYDVIICNYPNGDMVGHTGVYDAAVKACEAVDSCVGKVVAALKEVDGECLITADHGNAEQMIDPVTGGIHTAHTNLPVPFIYVGRNAEMASGGRLCDIAPTMLNLMDMEIPAEMTGTPLITLK.

The Mn(2+) site is built by Asp14 and Ser64. The active-site Phosphoserine intermediate is Ser64. Substrate-binding positions include His125, 155–156 (RD), Arg187, Arg193, 259–262 (RADR), and Lys332. Mn(2+) is bound by residues Asp399, His403, Asp440, His441, and His459.

This sequence belongs to the BPG-independent phosphoglycerate mutase family. In terms of assembly, monomer. It depends on Mn(2+) as a cofactor.

It catalyses the reaction (2R)-2-phosphoglycerate = (2R)-3-phosphoglycerate. It functions in the pathway carbohydrate degradation; glycolysis; pyruvate from D-glyceraldehyde 3-phosphate: step 3/5. Catalyzes the interconversion of 2-phosphoglycerate and 3-phosphoglycerate. The chain is 2,3-bisphosphoglycerate-independent phosphoglycerate mutase from Psychromonas ingrahamii (strain DSM 17664 / CCUG 51855 / 37).